Reading from the N-terminus, the 122-residue chain is Ribosome-binding factor A (122 aa).

Belongs to the RbfA family. As to quaternary structure, monomer. Binds 30S ribosomal subunits, but not 50S ribosomal subunits or 70S ribosomes.

The protein localises to the cytoplasm. In terms of biological role, one of several proteins that assist in the late maturation steps of the functional core of the 30S ribosomal subunit. Associates with free 30S ribosomal subunits (but not with 30S subunits that are part of 70S ribosomes or polysomes). Required for efficient processing of 16S rRNA. May interact with the 5'-terminal helix region of 16S rRNA. This Cupriavidus pinatubonensis (strain JMP 134 / LMG 1197) (Cupriavidus necator (strain JMP 134)) protein is Ribosome-binding factor A.